Reading from the N-terminus, the 621-residue chain is UvrABC system protein C (621 aa).

One can recognise a GIY-YIG domain in the interval 13 to 92; it reads NEPGVYLMKN…IKKYSPKYNI (80 aa). One can recognise a UVR domain in the interval 204-239; the sequence is RSLLNKLKEEMQSASGNLEFEKAASLRDKMIAIENI.

Belongs to the UvrC family. In terms of assembly, interacts with UvrB in an incision complex.

Its subcellular location is the cytoplasm. In terms of biological role, the UvrABC repair system catalyzes the recognition and processing of DNA lesions. UvrC both incises the 5' and 3' sides of the lesion. The N-terminal half is responsible for the 3' incision and the C-terminal half is responsible for the 5' incision. The chain is UvrABC system protein C from Clostridium beijerinckii (strain ATCC 51743 / NCIMB 8052) (Clostridium acetobutylicum).